A 325-amino-acid chain; its full sequence is Probable transcription factor At4g01260 (325 aa).

The tract at residues 1–98 is disordered; the sequence is MAPKQLKKIE…SMGEEDVKKK (98 aa). 2 stretches are compositionally biased toward low complexity: residues 23-32 and 49-69; these read ASSGESATSG and KPVVVSKPSGSKTTTKPESST. Positions 73 to 83 are enriched in basic and acidic residues; it reads RSFEKTDEMSK.

This sequence belongs to the GeBP family.

This is Probable transcription factor At4g01260 from Arabidopsis thaliana (Mouse-ear cress).